The following is a 256-amino-acid chain: tRNA (guanine-N(7)-)-methyltransferase (256 aa).

Glutamate 85, glutamate 110, aspartate 137, and aspartate 159 together coordinate S-adenosyl-L-methionine. Aspartate 159 is an active-site residue. Residues lysine 163 and aspartate 195 each contribute to the substrate site.

This sequence belongs to the class I-like SAM-binding methyltransferase superfamily. TrmB family.

It catalyses the reaction guanosine(46) in tRNA + S-adenosyl-L-methionine = N(7)-methylguanosine(46) in tRNA + S-adenosyl-L-homocysteine. It participates in tRNA modification; N(7)-methylguanine-tRNA biosynthesis. Catalyzes the formation of N(7)-methylguanine at position 46 (m7G46) in tRNA. In Rhodopseudomonas palustris (strain HaA2), this protein is tRNA (guanine-N(7)-)-methyltransferase.